We begin with the raw amino-acid sequence, 141 residues long: Large ribosomal subunit protein uL11 (141 aa).

It belongs to the universal ribosomal protein uL11 family. Part of the ribosomal stalk of the 50S ribosomal subunit. Interacts with L10 and the large rRNA to form the base of the stalk. L10 forms an elongated spine to which L12 dimers bind in a sequential fashion forming a multimeric L10(L12)X complex. Post-translationally, one or more lysine residues are methylated.

Functionally, forms part of the ribosomal stalk which helps the ribosome interact with GTP-bound translation factors. This chain is Large ribosomal subunit protein uL11, found in Roseiflexus castenholzii (strain DSM 13941 / HLO8).